The sequence spans 741 residues: MVNNPTAIEIQQTKLYQQWGLTDSEYELICTKILKRLPNYTETGLFSVMWSEHCSYKNSKPILKKFPTNGPHVLQGPGEGAGILDIGDGQAVVFKAESHNHPSAVEPYEGAATGVGGIIRDIFSMGATPIAILDSLRFGELNDNQTKYLVQEVVAGIGGYGNCIGIPTVGGEISFDPCYQANPLVNAMCVGLIEQKDIQQGKARGAGNSVLYVGAKTGRDGIHGATFASDEFAEGKATQRSAVQVGDPFMEKLLMDACLELILQHSDWLVGIQDMGAAGLVSSTAEMAAKAGTGMILDLDQVPQRETDMSAYEIMLSESQERMALCVRAGYEDQVIALFKGYDLDAVRIGEVTTKEQYQLWHQGQLVADLPVAALTDAAPVYHKDQAKPERLATFAAQAPYVPSVTDTQATWLALLKQPTIADKSSFYRHYDAQVKTNTVVLPGSDAAVVRIRGTKKALAMTTDCNGRYLYLDPHVGGQIAVAEAARNIVAAGGQPLGITDCLNYGNPEKPAVFWEFDQSAQGIAAACETFGTPVISGNVSLYNEFNGEAIYPTPMIGMVGLIRDIQDITTQDFKQVDDLIYLIGETDDNYAGSELQKMQQGTISDQLGHFSLATEKANQDLVLKAIQQGLITSAHDLSEGGLAVALSEATFKQGLGYHVQVDLASRQLFAETQSRFIVTVKAANQAAFEQISDQSAQLIGRVTAEPIMHIQTKDEMIDLTVEAAKDAWEAALPCLMKSEA.

His53 is a catalytic residue. Residues Tyr56 and Lys95 each contribute to the ATP site. Mg(2+) is bound at residue Glu97. Substrate-binding positions include 98 to 101 and Arg120; that span reads SHNH. The active-site Proton acceptor is the His99. A Mg(2+)-binding site is contributed by Asp121. A substrate-binding site is contributed by Gln244. Asp274 is a Mg(2+) binding site. 318–320 serves as a coordination point for substrate; the sequence is ESQ. ATP contacts are provided by Asp501 and Gly538. Mg(2+) is bound at residue Asn539. A substrate-binding site is contributed by Ser541.

This sequence belongs to the FGAMS family. As to quaternary structure, monomer. Part of the FGAM synthase complex composed of 1 PurL, 1 PurQ and 2 PurS subunits.

Its subcellular location is the cytoplasm. It catalyses the reaction N(2)-formyl-N(1)-(5-phospho-beta-D-ribosyl)glycinamide + L-glutamine + ATP + H2O = 2-formamido-N(1)-(5-O-phospho-beta-D-ribosyl)acetamidine + L-glutamate + ADP + phosphate + H(+). Its pathway is purine metabolism; IMP biosynthesis via de novo pathway; 5-amino-1-(5-phospho-D-ribosyl)imidazole from N(2)-formyl-N(1)-(5-phospho-D-ribosyl)glycinamide: step 1/2. Part of the phosphoribosylformylglycinamidine synthase complex involved in the purines biosynthetic pathway. Catalyzes the ATP-dependent conversion of formylglycinamide ribonucleotide (FGAR) and glutamine to yield formylglycinamidine ribonucleotide (FGAM) and glutamate. The FGAM synthase complex is composed of three subunits. PurQ produces an ammonia molecule by converting glutamine to glutamate. PurL transfers the ammonia molecule to FGAR to form FGAM in an ATP-dependent manner. PurS interacts with PurQ and PurL and is thought to assist in the transfer of the ammonia molecule from PurQ to PurL. In Latilactobacillus sakei subsp. sakei (strain 23K) (Lactobacillus sakei subsp. sakei), this protein is Phosphoribosylformylglycinamidine synthase subunit PurL.